A 313-amino-acid chain; its full sequence is uncharacterized protein (313 aa).

This is an uncharacterized protein from Archaeoglobus fulgidus (strain ATCC 49558 / DSM 4304 / JCM 9628 / NBRC 100126 / VC-16).